The sequence spans 403 residues: Tubby-like F-box protein 6 (403 aa).

The F-box domain occupies 50 to 105 (SCWAQLPPELLREVLVRIEESEVWWPSRRDVVACAGVCRSWRGITKEIVRVPEASG).

Belongs to the TUB family. In terms of tissue distribution, ubiquitous.

This Oryza sativa subsp. japonica (Rice) protein is Tubby-like F-box protein 6 (TULP6).